The primary structure comprises 123 residues: Putative iron-sulfur cluster insertion protein ErpA (123 aa).

Residues Cys-51, Cys-115, and Cys-117 each coordinate iron-sulfur cluster.

It belongs to the HesB/IscA family. As to quaternary structure, homodimer. Iron-sulfur cluster is required as a cofactor.

Functionally, required for insertion of 4Fe-4S clusters. This Burkholderia multivorans (strain ATCC 17616 / 249) protein is Putative iron-sulfur cluster insertion protein ErpA.